The sequence spans 376 residues: Actin-related protein T1 (376 aa).

It belongs to the actin family. In terms of tissue distribution, in skin, expressed in the basal, spinous and granular layers of the epidermis. Also expressed in hair follicles, sebaceaous glands, eccrine sweat glands and semen.

It localises to the cytoplasm. It is found in the cytoskeleton. Its subcellular location is the nucleus. The protein localises to the cytoplasmic vesicle. The protein resides in the secretory vesicle. It localises to the acrosome. Negatively regulates the Hedgehog (SHH) signaling. Binds to the promoter of the SHH signaling mediator, GLI1, and inhibits its expression. In Homo sapiens (Human), this protein is Actin-related protein T1.